The primary structure comprises 1360 residues: MDLREKHLGEPPLALGLSTRKALSVLKEQLEAVLEKHLKERKKSLTWKEAWRSSFLHLSNRCSCFHWPGASLMLLAVLLLLCCCGGQPAGSQGVELVNASALFLLLLLNLVLIGRQDRLKRREVERRLRGIIDQIQDALRDGKEIKWPNSMYPDLHMPFAPSWSLHWAYRDGHLVNLPVSLLVEGDIIALRPGQESFASLRGIKDDEHIVLEPGDLFPPFSPPPSPRGEVKRGPQNPQQHRLFRVLETPVIDNIRWCLDTALSRPVTALDNERFTVQSVMLHYAVPVVLAGFLITNALRFMFKAPGVTSWQYTLLQLQVNGMLPILPLLFPVLWVLATACGEARVLAQMSKASPSSLLAKFSEDTLSSYTEAVSSQEMLRCIWGHFLRVIQGTSPTLSHSASLLHSLGSVTVLCCVDKQGILSWPNPSPETVLFFSGKVEPPHSSHEDLTDDLSTRSFCHPEVEEEPHEHDALLAGSLNNTLHLSNEQERSDWLADGPKPSEPYPHHKGHGRSKHPSGSNVSFSRDTEGGEEEPSKAQPGTEGDPYEAEDFVCDYHLEMLSLSQDQQNPSCIQFDDSNWQSHLTSLKPLGLNVLLNLCNASVTERLCRFSDHLCNIALQESHSAVLPVHVPWGLCELARLIGFTPGAKELFKQENHLALYRLPSAETLKETSLGRPSCVTKRRPPLSHMISLFIKDTATSTEQMLSHGSADVVVEACTDFWDGADIYPLSGSDRKKVLDFYQRACLSGYCSAFAYKPMNCTLSSQLNGKCIELVQVPGQNSIFTMCELPSTIPIKPNNRRSSWSSDEGIGEVLEKEDCMQALSGQIFMGMVSSQYQARLDIVRLIDGLVNACIRFVYFSLEDELRSKVFAEKMGLETGWNCHISLTPNGDMPGSEIPPSSPSHAGSLHDDLNQVSRDDAEGLLLLEEEGHSDLISFQPTDSDIPSFLEDCNRAKLPRGIHQVRPHLQNIDNVPLLVPLFTDCTPDTMCEMIKIMQEYGEVTCCLGSSANLRNSCLFLQSDVSIALDPLYPSRCSWETFGYATSTTMAQASDGLSPLQLSGQLNSLPCSLTFRQEESISIIRLIEQARHATYGIRKCFLFLLQCQLTLVVIQFLSCLVQLPPLLSTTDILWLSCFCYPLLSISLLGKPPHSSIMSMATGKNLQSIPKKTQHYFLLCFLLKFSLTISSCLVCFGFTLQSFCDSARARNLTNCSSVMLCSNDDRAPAWFEDFANGLLSAQKLTAALIVLHTVFISITHVHRTKPLWRKSPLTNLWWAVTVPVVLLGQVVQTVVDLQLWTHRDSRVHFGLEDVPLLTWLLGCLSLVLVVVTNEIVKLHEIRVRVRYQKRQKLQFETKLGMNSPF.

The Cytoplasmic segment spans residues 1 to 64; sequence MDLREKHLGE…FLHLSNRCSC (64 aa). A helical membrane pass occupies residues 65–85; it reads FHWPGASLMLLAVLLLLCCCG. The Lumenal portion of the chain corresponds to 86-92; that stretch reads GQPAGSQ. Residues 93–113 traverse the membrane as a helical segment; the sequence is GVELVNASALFLLLLLNLVLI. Over 114-273 the chain is Cytoplasmic; that stretch reads GRQDRLKRRE…RPVTALDNER (160 aa). Phosphoserine is present on residues Ser-221 and Ser-225. The chain crosses the membrane as a helical span at residues 274-294; the sequence is FTVQSVMLHYAVPVVLAGFLI. The Lumenal portion of the chain corresponds to 295–320; it reads TNALRFMFKAPGVTSWQYTLLQLQVN. A helical transmembrane segment spans residues 321–341; it reads GMLPILPLLFPVLWVLATACG. Topologically, residues 342 to 1096 are cytoplasmic; the sequence is EARVLAQMSK…RHATYGIRKC (755 aa). Residues 417–422 carry the DKQGIL motif; it reads DKQGIL. Ser-444, Ser-445, and Ser-454 each carry phosphoserine. The interval 487-545 is disordered; that stretch reads EQERSDWLADGPKPSEPYPHHKGHGRSKHPSGSNVSFSRDTEGGEEEPSKAQPGTEGDP. Residues 506-515 are compositionally biased toward basic residues; the sequence is HHKGHGRSKH. Phosphoserine is present on residues Ser-517, Ser-522, Ser-802, and Ser-945. Residues 1097-1117 traverse the membrane as a helical segment; it reads FLFLLQCQLTLVVIQFLSCLV. Over 1118-1124 the chain is Lumenal; it reads QLPPLLS. A helical transmembrane segment spans residues 1125-1145; sequence TTDILWLSCFCYPLLSISLLG. Residues 1146–1171 lie on the Cytoplasmic side of the membrane; the sequence is KPPHSSIMSMATGKNLQSIPKKTQHY. Residues 1172–1192 form a helical membrane-spanning segment; the sequence is FLLCFLLKFSLTISSCLVCFG. At 1193–1232 the chain is on the lumenal side; the sequence is FTLQSFCDSARARNLTNCSSVMLCSNDDRAPAWFEDFANG. N-linked (GlcNAc...) asparagine glycans are attached at residues Asn-1206 and Asn-1209. Residues 1233-1253 traverse the membrane as a helical segment; sequence LLSAQKLTAALIVLHTVFISI. The Cytoplasmic segment spans residues 1254–1269; it reads THVHRTKPLWRKSPLT. A helical membrane pass occupies residues 1270 to 1290; the sequence is NLWWAVTVPVVLLGQVVQTVV. Residues 1291 to 1310 lie on the Lumenal side of the membrane; that stretch reads DLQLWTHRDSRVHFGLEDVP. A helical membrane pass occupies residues 1311–1331; the sequence is LLTWLLGCLSLVLVVVTNEIV. Residues 1332 to 1360 are Cytoplasmic-facing; it reads KLHEIRVRVRYQKRQKLQFETKLGMNSPF. Residues 1355–1357 carry the GMN; metal-binding motif motif; that stretch reads GMN.

As to quaternary structure, forms homooligomers.

It localises to the endoplasmic reticulum membrane. Functionally, could function in the uptake of Mg(2+) from the cytosol into the endoplasmic reticulum and regulate intracellular Mg(2+) homeostasis. The polypeptide is Transmembrane protein 94 (Mus musculus (Mouse)).